The sequence spans 570 residues: Nucleoprotein (570 aa).

A binding site for the cap structure m7GTP region spans residues 54–241; that stretch reads MRKDKRNDSD…IDVSKSSINV (188 aa). The disordered stretch occupies residues 342 to 361; that stretch reads IDLSQNKQMSPAKPKGAGHG. D390 and E392 together coordinate Mn(2+). Residues E400, C507, H510, and C530 each coordinate Zn(2+). Residue D534 participates in Mn(2+) binding.

Belongs to the arenaviridae nucleocapsid protein family. Homomultimerizes to form the nucleocapsid. Binds to viral genomic RNA. Interacts with glycoprotein G2. Interacts with protein Z; this interaction probably directs the encapsidated genome to budding sites. Interacts with protein L; this interaction does not interfere with Z-L interaction. Interacts with host IKBKE (via Protein kinase domain); the interaction inhibits IKBKE kinase activity.

It localises to the virion. The protein localises to the host cytoplasm. Functionally, encapsidates the genome, protecting it from nucleases. The encapsidated genomic RNA is termed the nucleocapsid (NC). Serves as template for viral transcription and replication. The increased presence of protein N in host cell does not seem to trigger the switch from transcription to replication as observed in other negative strain RNA viruses. Through the interaction with host IKBKE, strongly inhibits the phosphorylation and nuclear translocation of host IRF3, a protein involved in interferon activation pathway, leading to the inhibition of interferon-beta and IRF3-dependent promoters activation. Also encodes a functional 3'-5' exoribonuclease that degrades preferentially dsRNA substrates and thereby participates in the suppression of interferon induction. The protein is Nucleoprotein of Praomys (African soft-furred rats).